The chain runs to 185 residues: Large ribosomal subunit protein uL5 (185 aa).

This sequence belongs to the universal ribosomal protein uL5 family. In terms of assembly, part of the 50S ribosomal subunit; part of the 5S rRNA/L5/L18/L25 subcomplex. Contacts the 5S rRNA and the P site tRNA. Forms a bridge to the 30S subunit in the 70S ribosome.

Its function is as follows. This is one of the proteins that bind and probably mediate the attachment of the 5S RNA into the large ribosomal subunit, where it forms part of the central protuberance. In the 70S ribosome it contacts protein S13 of the 30S subunit (bridge B1b), connecting the 2 subunits; this bridge is implicated in subunit movement. Contacts the P site tRNA; the 5S rRNA and some of its associated proteins might help stabilize positioning of ribosome-bound tRNAs. In Bartonella henselae (strain ATCC 49882 / DSM 28221 / CCUG 30454 / Houston 1) (Rochalimaea henselae), this protein is Large ribosomal subunit protein uL5.